We begin with the raw amino-acid sequence, 328 residues long: GMP reductase (328 aa).

Cysteine 176 acts as the Thioimidate intermediate in catalysis. Isoleucine 205–valine 228 provides a ligand contact to NADP(+).

The protein belongs to the IMPDH/GMPR family. GuaC type 2 subfamily.

It carries out the reaction IMP + NH4(+) + NADP(+) = GMP + NADPH + 2 H(+). Functionally, catalyzes the irreversible NADPH-dependent deamination of GMP to IMP. It functions in the conversion of nucleobase, nucleoside and nucleotide derivatives of G to A nucleotides, and in maintaining the intracellular balance of A and G nucleotides. The sequence is that of GMP reductase from Bacillus thuringiensis (strain Al Hakam).